The following is a 311-amino-acid chain: Probable dihydroorotate dehydrogenase A (fumarate) (311 aa).

Residues lysine 45, 69–73 (NSMGL), and asparagine 128 each bind substrate. 45 to 46 (KT) provides a ligand contact to FMN. FMN is bound at residue asparagine 128. Residue cysteine 131 is the Nucleophile of the active site. Lysine 165 and valine 193 together coordinate FMN. Residue 194–195 (NS) participates in substrate binding. Residues glycine 220, 248–249 (GG), and 270–271 (GT) each bind FMN.

Belongs to the dihydroorotate dehydrogenase family. Type 1 subfamily. Homodimer. The cofactor is FMN.

It localises to the cytoplasm. It carries out the reaction (S)-dihydroorotate + fumarate = orotate + succinate. The protein operates within pyrimidine metabolism; UMP biosynthesis via de novo pathway. Functionally, catalyzes the conversion of dihydroorotate to orotate with fumarate as the electron acceptor. The protein is Probable dihydroorotate dehydrogenase A (fumarate) (pyrDA) of Streptococcus pneumoniae (strain ATCC BAA-255 / R6).